We begin with the raw amino-acid sequence, 704 residues long: Seven transmembrane domain-containing serine/threonine-protein kinase 2 (704 aa).

At 1–5 (MPSKE) the chain is on the extracellular side. A helical membrane pass occupies residues 6–26 (FIIPLILLCFYSVNGFVAVIS). Residues 27–42 (SLVELFIHKASWNSIK) are Cytoplasmic-facing. Residues 43-63 (IFFYSLLILQCLCRCIIIGWG) form a helical membrane-spanning segment. Topologically, residues 64–76 (MIETVQGGEFYSN) are extracellular. Residues 77 to 97 (FPSLLFISYAGLVALQMIQFL) form a helical membrane-spanning segment. Over 98-121 (PNDNQYLLLSEGKKNNHKVKVGTN) the chain is Cytoplasmic. The chain crosses the membrane as a helical span at residues 122–142 (ILIFFNLFMYFGMFLLFGIAE). Residues 143–185 (KQVGNSTSFNHHGNHNSTTSTSTDEIPLVSTEVGELYLFGDKD) lie on the Extracellular side of the membrane. Residues Asn-147 and Asn-158 are each glycosylated (N-linked (GlcNAc...) asparagine). A helical membrane pass occupies residues 186–206 (PIYIVLDCFYFVCLLLLLIFH). The Cytoplasmic segment spans residues 207–224 (SYVGWKTYKRNKDLFGIK). A helical transmembrane segment spans residues 225–245 (LNVIHLILLICIFIRSLLVII). The Extracellular portion of the chain corresponds to 246 to 265 (DPSSPNNSILHIDTESWLIY). Asn-251 is a glycosylation site (N-linked (GlcNAc...) asparagine). A helical transmembrane segment spans residues 266–286 (IYTISYYVVGEIIPGMLLIVI). The Cytoplasmic segment spans residues 287 to 704 (EFLLPYHKRK…WSIEKDSSSK (418 aa)). In terms of domain architecture, Protein kinase spans 317–682 (IAIHELLGMG…SLGVKFHLAN (366 aa)). Residues 323-331 (LGMGGSGAM) and Lys-350 contribute to the ATP site. The active-site Proton acceptor is Asp-506.

It belongs to the protein kinase superfamily. Ser/Thr protein kinase family.

The protein resides in the membrane. The enzyme catalyses L-seryl-[protein] + ATP = O-phospho-L-seryl-[protein] + ADP + H(+). The catalysed reaction is L-threonyl-[protein] + ATP = O-phospho-L-threonyl-[protein] + ADP + H(+). The chain is Seven transmembrane domain-containing serine/threonine-protein kinase 2 (7tmk2) from Dictyostelium discoideum (Social amoeba).